A 506-amino-acid chain; its full sequence is Aldehyde dehydrogenase (506 aa).

218 to 224 (GFGLEAG) provides a ligand contact to NAD(+). Active-site residues include glutamate 262 and cysteine 301.

The protein belongs to the aldehyde dehydrogenase family.

It carries out the reaction an aldehyde + NAD(+) + H2O = a carboxylate + NADH + 2 H(+). This chain is Aldehyde dehydrogenase, found in Rhodospirillum rubrum (strain ATCC 11170 / ATH 1.1.1 / DSM 467 / LMG 4362 / NCIMB 8255 / S1).